A 151-amino-acid polypeptide reads, in one-letter code: Large ribosomal subunit protein uL13 (151 aa).

The protein belongs to the universal ribosomal protein uL13 family. As to quaternary structure, part of the 50S ribosomal subunit.

In terms of biological role, this protein is one of the early assembly proteins of the 50S ribosomal subunit, although it is not seen to bind rRNA by itself. It is important during the early stages of 50S assembly. This chain is Large ribosomal subunit protein uL13, found in Synechococcus sp. (strain JA-3-3Ab) (Cyanobacteria bacterium Yellowstone A-Prime).